Consider the following 488-residue polypeptide: MAQSVQERTRLKNKRYESGVIPYAKMGYWDPNYVVKDTDILALFRVTPQPGVDPIEASAAVAGESSTATWTVIWCDLLTACDVYRAKAYRVDQVPNSPDQYFAYIAYDLDLFEEGSIANLTASIIGNVFGFKALAALRLEDMRIPIGYLKTFQGPATGVVVERERLNMFGKPFLGATVKPKLGLSSKNYGRVVYEGLKGGLNFLKDDENINSQPFMRWRERFLYVMEGVNRASAATGEIKGSYLNVTAATMEEMYNRAACAKEVGSIIIMIDLVIGYTAIQSMAIWARENNMILHLHRAGNSTYARQKNHGINFRVICKWMRMAGVDHIHAGTVVGKLEGDPIIVKGFYNTLLLPKLDVNLPQGLFFEMDWASLRKTVPVASGGIHAGQMHLLLKYLGDDVVLQFGGGTLGHPDGIQAGATANRVALEAIVLARNEGRDYVNEGPQILKEAARTCGPLQTSLDLWKDISFNFTSTDTADFVETPTANV.

2 residues coordinate substrate: Asn-127 and Thr-177. The Proton acceptor role is filled by Lys-179. Residue Lys-181 participates in substrate binding. Mg(2+) contacts are provided by Lys-205, Asp-207, and Glu-208. An N6-carboxylysine modification is found at Lys-205. The active-site Proton acceptor is His-297. Substrate contacts are provided by Arg-298, His-330, and Ser-382.

Belongs to the RuBisCO large chain family. Type I subfamily. In terms of assembly, heterohexadecamer of 8 large chains and 8 small chains. The cofactor is Mg(2+).

Its subcellular location is the plastid. The protein resides in the chloroplast. The enzyme catalyses 2 (2R)-3-phosphoglycerate + 2 H(+) = D-ribulose 1,5-bisphosphate + CO2 + H2O. It carries out the reaction D-ribulose 1,5-bisphosphate + O2 = 2-phosphoglycolate + (2R)-3-phosphoglycerate + 2 H(+). Functionally, ruBisCO catalyzes two reactions: the carboxylation of D-ribulose 1,5-bisphosphate, the primary event in carbon dioxide fixation, as well as the oxidative fragmentation of the pentose substrate in the photorespiration process. Both reactions occur simultaneously and in competition at the same active site. In Cyanidium caldarium (Red alga), this protein is Ribulose bisphosphate carboxylase large chain.